The following is a 349-amino-acid chain: Glycerol-3-phosphate dehydrogenase [NAD(+)], cytoplasmic (349 aa).

10–15 (GSGNWG) contacts NAD(+). Lysine 120 provides a ligand contact to substrate. Alanine 153 contacts NAD(+). Serine 154 bears the Phosphoserine mark. The active-site Proton acceptor is the lysine 204. Arginine 269 lines the NAD(+) pocket. Position 269–270 (269–270 (RN)) interacts with substrate. N6-succinyllysine is present on lysine 289. Lysine 296 and glutamine 298 together coordinate NAD(+). Tyrosine 326 is subject to Phosphotyrosine.

Belongs to the NAD-dependent glycerol-3-phosphate dehydrogenase family. Homodimer.

It is found in the cytoplasm. It carries out the reaction sn-glycerol 3-phosphate + NAD(+) = dihydroxyacetone phosphate + NADH + H(+). Functionally, has glycerol-3-phosphate dehydrogenase activity. The polypeptide is Glycerol-3-phosphate dehydrogenase [NAD(+)], cytoplasmic (Mus musculus (Mouse)).